The chain runs to 39 residues: Basic phospholipase A2 (39 aa).

Positions 27, 29, and 31 each coordinate Ca(2+).

Belongs to the phospholipase A2 family. Group II subfamily. D49 sub-subfamily. The cofactor is Ca(2+). As to expression, expressed by the venom gland.

It localises to the secreted. The enzyme catalyses a 1,2-diacyl-sn-glycero-3-phosphocholine + H2O = a 1-acyl-sn-glycero-3-phosphocholine + a fatty acid + H(+). Is selectively inhibited by the gamma-phospholipase A2 inhibitor (PLI) CgMIP-I (AC P0DQP7) but not by the alpha-PLI CgMIP-II (AC P0DQP8). Functionally, snake venom phospholipase A2 (PLA2) that shows high myotoxic activities, induces mild edema, and shows cytolytic, and anti-coagulant activities, as well as intracerebral lethal effect. Does not induce lethality at a dose of 5 ug/g, when intravenously injected into mice. PLA2 catalyzes the calcium-dependent hydrolysis of the 2-acyl groups in 3-sn-phosphoglycerides. In Cerrophidion godmani (Porthidium godmani), this protein is Basic phospholipase A2.